We begin with the raw amino-acid sequence, 286 residues long: Tryptophan 2,3-dioxygenase (286 aa).

Substrate-binding positions include 55–59, Tyr117, and Arg121; that span reads FIIIH. Residue His244 coordinates heme. Thr258 is a binding site for substrate.

Belongs to the tryptophan 2,3-dioxygenase family. In terms of assembly, homotetramer. The cofactor is heme.

The enzyme catalyses L-tryptophan + O2 = N-formyl-L-kynurenine. It functions in the pathway amino-acid degradation; L-tryptophan degradation via kynurenine pathway; L-kynurenine from L-tryptophan: step 1/2. In terms of biological role, heme-dependent dioxygenase that catalyzes the oxidative cleavage of the L-tryptophan (L-Trp) pyrrole ring and converts L-tryptophan to N-formyl-L-kynurenine. Catalyzes the oxidative cleavage of the indole moiety. This chain is Tryptophan 2,3-dioxygenase, found in Shewanella woodyi (strain ATCC 51908 / MS32).